An 886-amino-acid polypeptide reads, in one-letter code: Cadherin-1 (886 aa).

Positions 1-23 are cleaved as a signal peptide; it reads MGARCRSFSALLLLLQVSSWLCQ. A propeptide spanning residues 24 to 158 is cleaved from the precursor; that stretch reads QPESESDSCR…FHQGLRRQKR (135 aa). The Extracellular portion of the chain corresponds to 24–713; sequence QPESESDSCR…SLEAGLQVPA (690 aa). 5 Cadherin domains span residues 159 to 266, 267 to 379, 380 to 490, 491 to 597, and 598 to 701; these read DWVI…RPEF, IQEV…APIF, NPST…APIF, VPAE…DNAP, and IPEP…NCMK. Asp-261 serves as a coordination point for Ca(2+). Ser-284 and Ser-289 each carry an O-linked (Man...) serine glycan. Asp-292 contacts Ca(2+). Residues Thr-362, Thr-474, Thr-476, and Thr-513 are each glycosylated (O-linked (Man...) threonine). Residue Asn-562 is glycosylated (N-linked (GlcNAc...) asparagine). O-linked (Man...) threonine glycosylation is found at Thr-580, Thr-582, and Thr-584. A glycan (N-linked (GlcNAc...) asparagine) is linked at Asn-641. The chain crosses the membrane as a helical span at residues 714-734; it reads ILGILGGILALLILILLLLLF. Topologically, residues 735–886 are cytoplasmic; sequence LRRRTVVKEP…ADMYGGGEED (152 aa). Residues 751-771 form a disordered region; it reads DTRDNVYYYDEEGGGEEDQDF. 3 positions are modified to phosphotyrosine; by SRC: Tyr-757, Tyr-758, and Tyr-759. Residues 759–771 are compositionally biased toward acidic residues; it reads YDEEGGGEEDQDF. The segment at 762-773 is required for binding CTNND1 and PSEN1; it reads EGGGEEDQDFDL. 5 positions are modified to phosphoserine: Ser-774, Ser-797, Ser-842, Ser-844, and Ser-850. Residues 815 to 886 form a required for binding alpha, beta and region; that stretch reads IDENLKAADS…ADMYGGGEED (72 aa).

As to quaternary structure, homodimer; disulfide-linked. Component of an E-cadherin/ catenin adhesion complex composed of at least E-cadherin/CDH1, beta-catenin/CTNNB1 or gamma-catenin/JUP, and potentially alpha-catenin/CTNNA1; the complex is located to adherens junctions. Found in a complex composed of CDH1, RAP1A and PKP3; PKP3 acts as a scaffold protein within the complex, the complex is required for CDH1 localization to mature desmosome cell junctions. Interacts with the TRPV4 and CTNNB1 complex. Interacts with CTNND1. The stable association of CTNNA1 is controversial as CTNNA1 was shown not to bind to F-actin when assembled in the complex. Alternatively, the CTNNA1-containing complex may be linked to F-actin by other proteins such as LIMA1. Interaction with PSEN1, cleaves CDH1 resulting in the disassociation of cadherin-based adherens junctions (CAJs). Interacts with AJAP1 and DLGAP5. Interacts with TBC1D2. Interacts with LIMA1. Interacts with CAV1. Interacts with PIP5K1C. Interacts with DDR1; this stabilizes CDH1 at the cell surface and inhibits its internalization. Interacts with RAPGEF2. Interacts with RAB8B. Interacts with KLRG1. Forms a ternary complex composed of ADAM10, CADH1 and EPHA4; within the complex, CADH1 is cleaved by ADAM10 which disrupts adherens junctions. Interacts with SPEF1. Interacts with CTNNB1 and PKP2. Interacts with AMOTL2; the interaction may facilitate binding of radial actin fibers to cell junction complexes. Interacts with DSG3; the interaction is required for CDH1 localization to developing adherens junctions. During apoptosis or with calcium influx, cleaved by a membrane-bound metalloproteinase (ADAM10), PS1/gamma-secretase and caspase-3. Processing by the metalloproteinase, induced by calcium influx, causes disruption of cell-cell adhesion and the subsequent release of beta-catenin into the cytoplasm. The residual membrane-tethered cleavage product is rapidly degraded via an intracellular proteolytic pathway. Cleavage by caspase-3 releases the cytoplasmic tail resulting in disintegration of the actin microfilament system. The gamma-secretase-mediated cleavage promotes disassembly of adherens junctions. During development of the cochlear organ of Corti, cleavage by ADAM10 at adherens junctions promotes pillar cell separation. In terms of processing, N-glycosylation at Asn-641 is essential for expression, folding and trafficking. Addition of bisecting N-acetylglucosamine by MGAT3 modulates its cell membrane location. Post-translationally, ubiquitinated by a SCF complex containing SKP2, which requires prior phosphorylation by CK1/CSNK1A1. Ubiquitinated by CBLL1/HAKAI, requires prior phosphorylation at Tyr-758. O-glycosylated. O-manosylated by TMTC1, TMTC2, TMTC3 or TMTC4. Ser-289 and Thr-513 are O-manosylated by TMTC2 or TMTC4 but not TMTC1 or TMTC3.

The protein resides in the cell junction. Its subcellular location is the adherens junction. It is found in the cell membrane. The protein localises to the endosome. It localises to the golgi apparatus. The protein resides in the trans-Golgi network. Its subcellular location is the cytoplasm. It is found in the desmosome. Functionally, cadherins are calcium-dependent cell adhesion proteins. They preferentially interact with themselves in a homophilic manner in connecting cells; cadherins may thus contribute to the sorting of heterogeneous cell types. CDH1 is involved in mechanisms regulating cell-cell adhesions, mobility and proliferation of epithelial cells. Promotes organization of radial actin fiber structure and cellular response to contractile forces, via its interaction with AMOTL2 which facilitates anchoring of radial actin fibers to CDH1 junction complexes at the cell membrane. Plays a role in the early stages of desmosome cell-cell junction formation via facilitating the recruitment of DSG2 and DSP to desmosome plaques. Has a potent invasive suppressor role. It is a ligand for integrin alpha-E/beta-7. E-Cad/CTF2 promotes non-amyloidogenic degradation of Abeta precursors. Has a strong inhibitory effect on APP C99 and C83 production. This Rattus norvegicus (Rat) protein is Cadherin-1 (Cdh1).